An 852-amino-acid chain; its full sequence is Probable LRR receptor-like serine/threonine-protein kinase At1g05700 (852 aa).

The signal sequence occupies residues 1–25 (MEEFRFLYLIYSAAFALCLVVSVLA). At 26 to 510 (QDQSGFISID…SCRKSNSKKL (485 aa)) the chain is on the extracellular side. N-linked (GlcNAc...) asparagine glycans are attached at residues N138, N182, N231, N240, N258, N293, N400, N415, and N431. 3 LRR repeats span residues 410–432 (RITS…FSNL), 434–457 (MIQE…SKLK), and 458–479 (FLRV…ELLE). A glycan (N-linked (GlcNAc...) asparagine) is linked at N466. The chain crosses the membrane as a helical span at residues 511–531 (VIPLVASFAALFILLLLSGVF). The Cytoplasmic portion of the chain corresponds to 532 to 852 (WRIRNRRNKS…LQREESNKNY (321 aa)). Residue T561 is modified to Phosphothreonine. Residues 570–843 (NNFGQVLGKG…HIVRGLNECL (274 aa)) form the Protein kinase domain. ATP is bound by residues 576–584 (LGKGGFGTV) and K597. Position 642 is a phosphotyrosine (Y642). D693 (proton acceptor) is an active-site residue. Residues S697 and S727 each carry the phosphoserine modification. Residues T728 and T733 each carry the phosphothreonine modification.

This sequence belongs to the protein kinase superfamily. Ser/Thr protein kinase family.

It localises to the membrane. It carries out the reaction L-seryl-[protein] + ATP = O-phospho-L-seryl-[protein] + ADP + H(+). The catalysed reaction is L-threonyl-[protein] + ATP = O-phospho-L-threonyl-[protein] + ADP + H(+). This is Probable LRR receptor-like serine/threonine-protein kinase At1g05700 from Arabidopsis thaliana (Mouse-ear cress).